The primary structure comprises 742 residues: Phosphoribosylformylglycinamidine synthase subunit PurL (742 aa).

Residue H54 is part of the active site. Residues Y57 and K96 each coordinate ATP. Residue E98 participates in Mg(2+) binding. Residues 99–102 and R121 contribute to the substrate site; that span reads SHNH. The Proton acceptor role is filled by H100. D122 is a Mg(2+) binding site. Positions 225 and 245 each coordinate substrate. D273 contributes to the Mg(2+) binding site. Residue 317–319 participates in substrate binding; the sequence is ESQ. Residue G537 participates in ATP binding. A Mg(2+)-binding site is contributed by N538. S540 contributes to the substrate binding site.

The protein belongs to the FGAMS family. In terms of assembly, monomer. Part of the FGAM synthase complex composed of 1 PurL, 1 PurQ and 2 PurS subunits.

The protein resides in the cytoplasm. The catalysed reaction is N(2)-formyl-N(1)-(5-phospho-beta-D-ribosyl)glycinamide + L-glutamine + ATP + H2O = 2-formamido-N(1)-(5-O-phospho-beta-D-ribosyl)acetamidine + L-glutamate + ADP + phosphate + H(+). It catalyses the reaction L-glutamine + H2O = L-glutamate + NH4(+). Its pathway is purine metabolism; IMP biosynthesis via de novo pathway; 5-amino-1-(5-phospho-D-ribosyl)imidazole from N(2)-formyl-N(1)-(5-phospho-D-ribosyl)glycinamide: step 1/2. Functionally, part of the phosphoribosylformylglycinamidine synthase complex involved in the purines biosynthetic pathway. Catalyzes the ATP-dependent conversion of formylglycinamide ribonucleotide (FGAR) and glutamine to yield formylglycinamidine ribonucleotide (FGAM) and glutamate. The FGAM synthase complex is composed of three subunits. PurQ produces an ammonia molecule by converting glutamine to glutamate. PurL transfers the ammonia molecule to FGAR to form FGAM in an ATP-dependent manner. PurS interacts with PurQ and PurL and is thought to assist in the transfer of the ammonia molecule from PurQ to PurL. The protein is Phosphoribosylformylglycinamidine synthase subunit PurL of Bacillus subtilis (strain 168).